Here is a 688-residue protein sequence, read N- to C-terminus: Polyribonucleotide nucleotidyltransferase (688 aa).

2 residues coordinate Mg(2+): Asp484 and Asp490. A KH domain is found at 550 to 609; sequence PTTEIFNVAPDKIVEIIGQGGRVIREIVEKFEVKIDLNKPSGEVKIMGNKERVLKTKEFI. Residues 626-688 form the S1 motif domain; the sequence is DEVLEAQVKR…NKGKIALDLA (63 aa).

Belongs to the polyribonucleotide nucleotidyltransferase family. Mg(2+) serves as cofactor.

The protein localises to the cytoplasm. The enzyme catalyses RNA(n+1) + phosphate = RNA(n) + a ribonucleoside 5'-diphosphate. Involved in mRNA degradation. Catalyzes the phosphorolysis of single-stranded polyribonucleotides processively in the 3'- to 5'-direction. This chain is Polyribonucleotide nucleotidyltransferase, found in Helicobacter pylori (strain Shi470).